We begin with the raw amino-acid sequence, 377 residues long: Guanine nucleotide-binding protein subunit alpha-13 (377 aa).

S-palmitoyl cysteine attachment occurs at residues cysteine 14 and cysteine 18. Residues 47 to 377 form the G-alpha domain; it reads RLVKILLLGA…HDNLKQLMLQ (331 aa). The segment at 50 to 63 is G1 motif; it reads KILLLGAGESGKST. Residues 58-63, serine 173, and 197-200 contribute to the GTP site; these read ESGKST and LLAR. Residue serine 62 participates in Mg(2+) binding. The segment at 195-203 is G2 motif; that stretch reads DILLARRPT. Threonine 203 lines the Mg(2+) pocket. A Phosphothreonine modification is found at threonine 203. A G3 motif region spans residues 218 to 227; that stretch reads FKMVDVGGQR. The G4 motif stretch occupies residues 287-294; sequence ILFLNKTD. Residues 291-294 and alanine 349 contribute to the GTP site; that span reads NKTD. The interval 347–352 is G5 motif; it reads TTAINT.

This sequence belongs to the G-alpha family. G(12) subfamily. In terms of assembly, g proteins are composed of 3 units; alpha, beta and gamma. The alpha chain contains the guanine nucleotide binding site. Interacts with UBXD5. Interacts with HAX1. Interacts (in GTP-bound form) with PPP5C (via TPR repeats); activates PPP5C phosphatase activity and translocates PPP5C to the cell membrane. Interacts with RGS22. Interacts (in GTP-bound form) with ARHGEF1. Interacts (in GTP-bound form) with ARHGEF11 (via RGS domain). Interacts (in GTP-bound form) with ARHGEF12 (via RGS domain). Interacts with CTNND1. Interacts with GAS2L2. Interacts with GPR35. Interacts with GPR174. Phosphorylation on Thr-203 destabilizes the heterotrimer of alpha, beta and gamma, and inhibits Rho activation. Expressed in brain and testis, as well as in kidney and sperm (at protein level).

It is found in the membrane. It localises to the melanosome. The protein localises to the cytoplasm. Its subcellular location is the nucleus. In terms of biological role, guanine nucleotide-binding proteins (G proteins) are involved as modulators or transducers in various transmembrane signaling systems. Activates effector molecule RhoA by binding and activating RhoGEFs (ARHGEF1/p115RhoGEF, ARHGEF11/PDZ-RhoGEF and ARHGEF12/LARG). GNA13-dependent Rho signaling subsequently regulates transcription factor AP-1 (activating protein-1). Promotes tumor cell invasion and metastasis by activating Rho/ROCK signaling pathway. Inhibits CDH1-mediated cell adhesion in a process independent from Rho activation. In lymphoid follicles, transmits P2RY8- and S1PR2-dependent signals that lead to inhibition of germinal center (GC) B cell growth and migration outside the GC niche. This chain is Guanine nucleotide-binding protein subunit alpha-13 (Gna13), found in Mus musculus (Mouse).